The sequence spans 1328 residues: 5'-3' exoribonuclease 1 (1328 aa).

The interval 1211–1328 (AGKNRKTNVS…VQPMGKLQIN (118 aa)) is disordered. Polar residues predominate over residues 1217–1231 (TNVSANNVSQGTDSR). Positions 1275-1286 (HKSKSKFSKGNH) are enriched in basic residues.

It belongs to the 5'-3' exonuclease family. Monomer. It depends on Mg(2+) as a cofactor.

Its subcellular location is the cytoplasm. The protein localises to the perinuclear region. The protein resides in the P-body. Strand exchange activity is enhanced by fatty acid synthase (stimulatory factor P190/210). In terms of biological role, multifunctional protein that exhibits several independent functions at different levels of the cellular processes. 5'-3' exonuclease component of the nonsense-mediated mRNA decay (NMD) which is a highly conserved mRNA degradation pathway, an RNA surveillance system whose role is to identify and rid cells of mRNA with premature termination codons and thus prevents accumulation of potentially harmful truncated proteins. Involved in the degradation of several hypomodified mature tRNA species and participates in the 5'-processing or the degradation of the snoRNA precursors and rRNA processing. The sequence is that of 5'-3' exoribonuclease 1 (exo2) from Schizosaccharomyces pombe (strain 972 / ATCC 24843) (Fission yeast).